The following is a 715-amino-acid chain: Elongation factor G (715 aa).

The tr-type G domain occupies 12–309; sequence RRVRNIGIMA…GVIDYLPSPL (298 aa). GTP contacts are provided by residues 21-28, 108-112, and 162-165; these read AHIDAGKT, DTPGH, and NKMD.

The protein belongs to the TRAFAC class translation factor GTPase superfamily. Classic translation factor GTPase family. EF-G/EF-2 subfamily.

The protein resides in the cytoplasm. Functionally, catalyzes the GTP-dependent ribosomal translocation step during translation elongation. During this step, the ribosome changes from the pre-translocational (PRE) to the post-translocational (POST) state as the newly formed A-site-bound peptidyl-tRNA and P-site-bound deacylated tRNA move to the P and E sites, respectively. Catalyzes the coordinated movement of the two tRNA molecules, the mRNA and conformational changes in the ribosome. The polypeptide is Elongation factor G (Rubrobacter xylanophilus (strain DSM 9941 / JCM 11954 / NBRC 16129 / PRD-1)).